Reading from the N-terminus, the 322-residue chain is NADH oxidoreductase HCR (322 aa).

The FAD-binding FR-type domain occupies 7 to 107; sequence QCPWRMQVHH…SDAMGEFTCD (101 aa). Positions 111–213 are oxidoreductase; the sequence is EDKFLLLAAG…APYMDWVEQE (103 aa). Residues 237–322 form the 2Fe-2S ferredoxin-type domain; sequence SGLKFTKLQP…CHPQGDLVLA (86 aa). [2Fe-2S] cluster contacts are provided by cysteine 273, cysteine 278, cysteine 281, and cysteine 311.

The protein in the N-terminal section; belongs to the FAD-binding oxidoreductase type 6 family. The cofactor is [2Fe-2S] cluster. FAD is required as a cofactor.

NADH oxidoreductase acting in concert with HCP. In Escherichia coli (strain K12), this protein is NADH oxidoreductase HCR (hcr).